The sequence spans 208 residues: Large ribosomal subunit protein bL25 (208 aa).

The segment at 184–208 (VTISGTSSDQDTSGGESSGTTTSED) is disordered. Residues 187-208 (SGTSSDQDTSGGESSGTTTSED) are compositionally biased toward low complexity.

It belongs to the bacterial ribosomal protein bL25 family. CTC subfamily. In terms of assembly, part of the 50S ribosomal subunit; part of the 5S rRNA/L5/L18/L25 subcomplex. Contacts the 5S rRNA. Binds to the 5S rRNA independently of L5 and L18.

In terms of biological role, this is one of the proteins that binds to the 5S RNA in the ribosome where it forms part of the central protuberance. This chain is Large ribosomal subunit protein bL25, found in Ehrlichia ruminantium (strain Gardel).